The sequence spans 860 residues: Transforming growth factor-beta receptor-associated protein 1 (860 aa).

Residues 24–297 (HISIECVECC…HILQDFEGRV (274 aa)) form the CNH domain. Residues 564–732 (RPLDEQQQTS…YLRAGPSAQD (169 aa)) form a CHCR repeat.

This sequence belongs to the TRAP1 family. As to quaternary structure, interacts with TGFBR2 and ACVR2B; in the absence of ligand stimulation. Interacts with TGFBR1, ACVRL1, BMPR1A and ACVR1B; in the absence of ligand stimulation and to a less extent. Interacts with SMAD4; the interaction seems to be mutually exclusive with the interaction of SMAD4 and phosphorylated SMAD2. May interact with ALOX5. Interacts with RAB5C. Interacts with VPS8, VPS11 and VPS16. Component of the putative class C core vacuole/endosome tethering (CORVET) complex; the core of which composed of the class C Vps proteins VPS11, VPS16, VPS18 and VPS33A, is associated with VPS8 and TGFBRAP1.

The protein resides in the cytoplasm. It is found in the early endosome. Functionally, plays a role in the TGF-beta/activin signaling pathway. It associates with inactive heteromeric TGF-beta and activin receptor complexes, mainly through the type II receptor, and is released upon activation of signaling. May recruit SMAD4 to the vicinity of the receptor complex and facilitate its interaction with receptor-regulated Smads, such as SMAD2. In terms of biological role, plays a role in vesicle-mediated protein trafficking of the endocytic membrane transport pathway. Believed to act as a component of the putative CORVET endosomal tethering complexes which is proposed to be involved in the Rab5-to-Rab7 endosome conversion probably implicating MON1A/B, and via binding SNAREs and SNARE complexes to mediate tethering and docking events during SNARE-mediated membrane fusion. The CORVET complex is proposed to function as a Rab5 effector to mediate early endosome fusion probably in specific endosome subpopulations. Functions predominantly in APPL1-containing endosomes and in degradative but not recycling trafficking of endocytosed cargo. The protein is Transforming growth factor-beta receptor-associated protein 1 (Tgfbrap1) of Mus musculus (Mouse).